The chain runs to 94 residues: Long neurotoxin-like OH-31 (94 aa).

Positions 1-19 are cleaved as a signal peptide; sequence MKTLLLTLVVVTILCLDLG. 4 disulfide bridges follow: Cys-35–Cys-55, Cys-37–Cys-66, Cys-70–Cys-81, and Cys-82–Cys-87.

It belongs to the three-finger toxin family. Long-chain subfamily. Type II alpha-neurotoxin sub-subfamily. Expressed by the venom gland.

Its subcellular location is the secreted. In terms of biological role, binds with high affinity to muscular nicotinic acetylcholine receptors (nAChRs), whereas it binds with a low affinity to neuronal alpha-7/CHRNA7 nAChRs. The polypeptide is Long neurotoxin-like OH-31 (Ophiophagus hannah (King cobra)).